We begin with the raw amino-acid sequence, 192 residues long: Protein GrpE (192 aa).

The disordered stretch occupies residues 1 to 43 (MSKEEFPHEKDLKDEVTPDKAPKKDPKAASKEEVKEDPAKDYE).

The protein belongs to the GrpE family. Homodimer.

The protein resides in the cytoplasm. In terms of biological role, participates actively in the response to hyperosmotic and heat shock by preventing the aggregation of stress-denatured proteins, in association with DnaK and GrpE. It is the nucleotide exchange factor for DnaK and may function as a thermosensor. Unfolded proteins bind initially to DnaJ; upon interaction with the DnaJ-bound protein, DnaK hydrolyzes its bound ATP, resulting in the formation of a stable complex. GrpE releases ADP from DnaK; ATP binding to DnaK triggers the release of the substrate protein, thus completing the reaction cycle. Several rounds of ATP-dependent interactions between DnaJ, DnaK and GrpE are required for fully efficient folding. The protein is Protein GrpE of Lactobacillus gasseri (strain ATCC 33323 / DSM 20243 / BCRC 14619 / CIP 102991 / JCM 1131 / KCTC 3163 / NCIMB 11718 / NCTC 13722 / AM63).